Consider the following 295-residue polypeptide: MNENQMKRIHTGKGFIAALDQSGGSTPKALLEYGIKENSYSNEDEMFGLVHEMRKRIIKSPAFTLEYILGAILFEDTMYRTIDNQYTPDYLWKEKNIVPFLKVDKGLTEIENGVQLMKPISNLDDLLKHAVEKNIFGTKMRSVIKEANAKGIKMLVNQQFEIGKQIVEAGLVPIIEPEVDIHSTDKEESEKLLKLEILEQLSKLDKETKVMLKLSIPTQDNFYIDLIDDPHVVRVVALSGGYSQAEAKERLGRNHGLIASFSRALSQGLTAQQTEEEFNGTISKSIKEIYEASIK.

The Proton acceptor role is filled by Glu176. Lys213 acts as the Schiff-base intermediate with dihydroxyacetone-P in catalysis.

The protein belongs to the class I fructose-bisphosphate aldolase family.

It carries out the reaction beta-D-fructose 1,6-bisphosphate = D-glyceraldehyde 3-phosphate + dihydroxyacetone phosphate. Its pathway is carbohydrate degradation; glycolysis; D-glyceraldehyde 3-phosphate and glycerone phosphate from D-glucose: step 4/4. This Clostridium beijerinckii (strain ATCC 51743 / NCIMB 8052) (Clostridium acetobutylicum) protein is Fructose-bisphosphate aldolase class 1.